Reading from the N-terminus, the 367-residue chain is C-C chemokine receptor type 9 (367 aa).

At 1-46 the chain is on the extracellular side; the sequence is MVPTEATSLILNPSDDYGYDGTPPMEYDTNLTDYFCEKSHVRQFAG. Asparagine 30 is a glycosylation site (N-linked (GlcNAc...) asparagine). Disulfide bonds link cysteine 36–cysteine 287 and cysteine 117–cysteine 196. A helical membrane pass occupies residues 47 to 72; the sequence is HFLPPLYWLVFIVGAVGNSLVILVYW. At 73–83 the chain is on the cytoplasmic side; the sequence is YCTRVKTMTDM. The chain crosses the membrane as a helical span at residues 84–107; that stretch reads FLLNLAIADLLFLTTLPFWAIAAA. At 108–118 the chain is on the extracellular side; the sequence is DQWKFQTFMCK. A helical membrane pass occupies residues 119 to 148; it reads VVNSMYKMNFYSCVLLIMCISVDRYIAIAQ. Residues 149 to 157 lie on the Cytoplasmic side of the membrane; it reads AMRAQMWRQ. Residues 158–183 form a helical membrane-spanning segment; it reads KRLLYSKMVCFTIWVMAAALCLPELL. Topologically, residues 184 to 206 are extracellular; that stretch reads YSQVKEEHGTAICTVVYSSNEST. The N-linked (GlcNAc...) asparagine glycan is linked to asparagine 203. The chain crosses the membrane as a helical span at residues 207 to 241; it reads KLKSAVLTLKVTLGFFLPFVVMACCYAIIIHTLIR. At 242-246 the chain is on the cytoplasmic side; that stretch reads AKKSS. Residues 247–281 form a helical membrane-spanning segment; sequence KHKALKVTITVLTVFVLSQFPHNCVLLVQTIDAYA. The Extracellular segment spans residues 282 to 288; sequence TFISSCA. Residues 289 to 319 form a helical membrane-spanning segment; sequence LSIKIDICFQVTQTVAFFHSCLNPVLYVFVG. Residues 320 to 367 are Cytoplasmic-facing; the sequence is ERFRRDLVKTLKNLGCISQAQWVSFTRREGSLKLSSMLLETTSGALSF.

Belongs to the G-protein coupled receptor 1 family.

It localises to the cell membrane. In terms of biological role, receptor for chemokine SCYA25/TECK. Subsequently transduces a signal by increasing the intracellular calcium ions level. The chain is C-C chemokine receptor type 9 (CCR9) from Ovis aries (Sheep).